We begin with the raw amino-acid sequence, 572 residues long: MSYRIDRQTYAETYGPTVGDRLRLADTDLIIEIEHDYTHYGDEVKFGGGKVIRDGMGQSPIANAEGAVDVVITNAVILDWWGVVKADVGIKDGKIYKIGKAGNPYTQEGVDIIIGPGTEAIAGEGMILTAGGIDAHIHFICPQQIATAIAAGITTMIGGGTGPATGTNATTCTPGPWNIYRMLQAADAFPVNLGFLGKGNSSQPQGLIEQVQAGVVGLKLHEDWGSTPNAIDTCLSVAEDYDIQVAIHTDTLNESGFVEDTIAAFKNRTIHAYHTEGAGGGHAPDIIKLCGQANVLPSSTNPTRPYTVNTLDEHLDMLMVCHHLDPSIPEDVAFAESRIRRETIAAEDILHDLGAFSIISSDSQAMGRVGESIIRTWQTAHKMKVQRGHLRDPQRPGVDHDNFRARRYVAKYTINPAITHGIAEYVGSVEVGKIADLCLWKPAFFGVKPELVIKGGVIAYAQMGDANASIPTPQPVHMQPMFASYGGCRTTTSVTFMSQAGIANNIPEQLGLQKTVLPVGHIRQLRKADLKLNDYLPHIEVDPETYEVRADGELLTCEPATVLPLAQRYFLF.

One can recognise a Urease domain in the interval 131 to 572 (GGIDAHIHFI…LPLAQRYFLF (442 aa)). The Ni(2+) site is built by His-136, His-138, and Lys-219. Position 219 is an N6-carboxylysine (Lys-219). Residue His-221 coordinates substrate. Residues His-248 and His-274 each coordinate Ni(2+). Residue His-322 is the Proton donor of the active site. Asp-362 lines the Ni(2+) pocket.

This sequence belongs to the metallo-dependent hydrolases superfamily. Urease alpha subunit family. Heterotrimer of UreA (gamma), UreB (beta) and UreC (alpha) subunits. Three heterotrimers associate to form the active enzyme. Ni cation serves as cofactor. Post-translationally, carboxylation allows a single lysine to coordinate two nickel ions.

It is found in the cytoplasm. It catalyses the reaction urea + 2 H2O + H(+) = hydrogencarbonate + 2 NH4(+). The protein operates within nitrogen metabolism; urea degradation; CO(2) and NH(3) from urea (urease route): step 1/1. The protein is Urease subunit alpha of Thermosynechococcus vestitus (strain NIES-2133 / IAM M-273 / BP-1).